A 145-amino-acid chain; its full sequence is 3-hydroxyacyl-[acyl-carrier-protein] dehydratase FabZ (145 aa).

Residue H47 is part of the active site.

This sequence belongs to the thioester dehydratase family. FabZ subfamily.

It localises to the cytoplasm. It carries out the reaction a (3R)-hydroxyacyl-[ACP] = a (2E)-enoyl-[ACP] + H2O. In terms of biological role, involved in unsaturated fatty acids biosynthesis. Catalyzes the dehydration of short chain beta-hydroxyacyl-ACPs and long chain saturated and unsaturated beta-hydroxyacyl-ACPs. The protein is 3-hydroxyacyl-[acyl-carrier-protein] dehydratase FabZ of Thiobacillus denitrificans (strain ATCC 25259 / T1).